Consider the following 345-residue polypeptide: tRNA pseudouridine synthase B (345 aa).

Catalysis depends on aspartate 39, which acts as the Nucleophile.

Belongs to the pseudouridine synthase TruB family. Type 1 subfamily.

The catalysed reaction is uridine(55) in tRNA = pseudouridine(55) in tRNA. Responsible for synthesis of pseudouridine from uracil-55 in the psi GC loop of transfer RNAs. In Rickettsia peacockii (strain Rustic), this protein is tRNA pseudouridine synthase B.